The primary structure comprises 399 residues: Carbamoyl phosphate synthase arginine-specific small chain (399 aa).

One can recognise a Glutamine amidotransferase type-1 domain in the interval 187–379 (DVALVDCGVK…VERMRCYRKL (193 aa)). The active-site Nucleophile is the Cys-267. Residues His-352 and Glu-354 contribute to the active site.

Belongs to the CarA family. Heterodimer composed of 2 chains; the small (or glutamine) chain promotes the hydrolysis of glutamine to ammonia, which is used by the large (or ammonia) chain to synthesize carbamoyl phosphate.

It localises to the cytoplasm. It catalyses the reaction hydrogencarbonate + L-glutamine + 2 ATP + H2O = carbamoyl phosphate + L-glutamate + 2 ADP + phosphate + 2 H(+). It carries out the reaction L-glutamine + H2O = L-glutamate + NH4(+). It participates in amino-acid biosynthesis; L-arginine biosynthesis; carbamoyl phosphate from bicarbonate: step 1/1. Its function is as follows. Small subunit of the arginine-specific carbamoyl phosphate synthase (CPSase). CPSase catalyzes the formation of carbamoyl phosphate from the ammonia moiety of glutamine, carbonate, and phosphate donated by ATP, constituting the first step of 2 biosynthetic pathways, one leading to arginine and/or urea and the other to pyrimidine nucleotides. The small subunit (glutamine amidotransferase) binds and cleaves glutamine to supply the large subunit with the substrate ammonia. This chain is Carbamoyl phosphate synthase arginine-specific small chain (CPA1), found in Eremothecium gossypii (strain ATCC 10895 / CBS 109.51 / FGSC 9923 / NRRL Y-1056) (Yeast).